The following is a 593-amino-acid chain: Meiosis-specific APC/C activator protein AMA1 (593 aa).

Positions 1 to 11 (MATPHLYHRYN) are enriched in basic residues. The segment at 1-26 (MATPHLYHRYNSKSSNKNINSSGNST) is disordered. Residues 12–25 (SKSSNKNINSSGNS) are compositionally biased toward low complexity. The C-box motif lies at 29–35 (DRFIPKS). Residues 94-109 (SSISSSSESQVTRSGS) are compositionally biased toward low complexity. Residues 94–125 (SSISSSSESQVTRSGSARASRNDYSKLTKEQK) form a disordered region. Basic and acidic residues predominate over residues 113-125 (SRNDYSKLTKEQK). 6 WD repeats span residues 226–264 (RNDFYSNLISWSRTTNNVLVGLGCSVYIWSEKEGAVSIL), 271–310 (EKRDLVTCVSFCPYNTYFIVGTKFGRILLYDQKEFFHSSN), 323–364 (ESFK…FPIK), 388–427 (AQAQQVCGISLNEHANLLAVGGNDNSCSLWDISDLDKPIK), 432–474 (PHKA…LLDE), and 525–564 (PNPLRVLSAVISPSSMAICVATNDETIRFYELWNDKEEII).

This sequence belongs to the WD repeat CDC20/Fizzy family. As to quaternary structure, interacts with CDC16.

In terms of biological role, activator protein that regulates the ubiquitin ligase activity and substrate specificity of the anaphase promoting complex/cyclosome (APC/C). Required for the ubiquitination and subsequent degradation of the B-type cyclin CLB1 by the APC/C complex during meiosis. Required for meiosis I, late meiotic gene expression and spore wall assembly. The polypeptide is Meiosis-specific APC/C activator protein AMA1 (AMA1) (Saccharomyces cerevisiae (strain ATCC 204508 / S288c) (Baker's yeast)).